Here is a 427-residue protein sequence, read N- to C-terminus: Glutamate-1-semialdehyde 2,1-aminomutase (427 aa).

K265 is subject to N6-(pyridoxal phosphate)lysine.

The protein belongs to the class-III pyridoxal-phosphate-dependent aminotransferase family. HemL subfamily. In terms of assembly, homodimer. Requires pyridoxal 5'-phosphate as cofactor.

Its subcellular location is the cytoplasm. The catalysed reaction is (S)-4-amino-5-oxopentanoate = 5-aminolevulinate. Its pathway is porphyrin-containing compound metabolism; protoporphyrin-IX biosynthesis; 5-aminolevulinate from L-glutamyl-tRNA(Glu): step 2/2. The polypeptide is Glutamate-1-semialdehyde 2,1-aminomutase (Pseudomonas fluorescens (strain SBW25)).